A 119-amino-acid chain; its full sequence is Large ribosomal subunit protein bL20 (119 aa).

This sequence belongs to the bacterial ribosomal protein bL20 family.

Functionally, binds directly to 23S ribosomal RNA and is necessary for the in vitro assembly process of the 50S ribosomal subunit. It is not involved in the protein synthesizing functions of that subunit. The sequence is that of Large ribosomal subunit protein bL20 from Streptococcus mutans serotype c (strain ATCC 700610 / UA159).